Reading from the N-terminus, the 712-residue chain is UvrABC system protein B (712 aa).

One can recognise a Helicase ATP-binding domain in the interval 35–421 (RRVQAGEKDV…SDGAVEQIIR (387 aa)). 48 to 55 (GATGTGKS) is a binding site for ATP. A Beta-hairpin motif is present at residues 101 to 124 (YYDYYQPEAYVPQSDTYIEKDSSI). The 167-residue stretch at 438–604 (QIDDLVHEIR…PLRKKINDIV (167 aa)) folds into the Helicase C-terminal domain. Residues 625-655 (TKEGKGAKAPVPALGGQKTGGAKAARGRAKE) form a disordered region. One can recognise a UVR domain in the interval 667–702 (AEQIEDLTTRMRAAAADLQFEIAARLRDEVSEMKKE).

This sequence belongs to the UvrB family. Forms a heterotetramer with UvrA during the search for lesions. Interacts with UvrC in an incision complex.

The protein localises to the cytoplasm. In terms of biological role, the UvrABC repair system catalyzes the recognition and processing of DNA lesions. A damage recognition complex composed of 2 UvrA and 2 UvrB subunits scans DNA for abnormalities. Upon binding of the UvrA(2)B(2) complex to a putative damaged site, the DNA wraps around one UvrB monomer. DNA wrap is dependent on ATP binding by UvrB and probably causes local melting of the DNA helix, facilitating insertion of UvrB beta-hairpin between the DNA strands. Then UvrB probes one DNA strand for the presence of a lesion. If a lesion is found the UvrA subunits dissociate and the UvrB-DNA preincision complex is formed. This complex is subsequently bound by UvrC and the second UvrB is released. If no lesion is found, the DNA wraps around the other UvrB subunit that will check the other stand for damage. In Streptomyces coelicolor (strain ATCC BAA-471 / A3(2) / M145), this protein is UvrABC system protein B.